The following is a 213-amino-acid chain: Homeobox protein koza (213 aa).

Residues 24–72 are disordered; it reads ILSHMGPGSKEKSLGFPKTDQDQDSSLRDTEEKYASEKLQSSSQPAEIH. Basic and acidic residues predominate over residues 32-59; sequence SKEKSLGFPKTDQDQDSSLRDTEEKYAS. A DNA-binding region (homeobox) is located at residues 102–161; sequence QKRSRAAFSHSQVIELERKFSSQKYLSAPERAQLAKSLKLTETQVKIWFQNRRYKTKRKQ.

This sequence belongs to the NK-3 homeobox family. Expressed in the muscle layer of embryonic somites. In tailbud embryos, expressed throughout the entire myotome but at the mid-tailbud stage (stage 32), expression becomes restricted to the outer periphery of the somite so that by the tadpole stage only the outer, type I cells show expression. Also expressed in the dorsal cement gland and in the myocardial layer of the developing heart. In all tissues, expression begins after terminal differentiation.

Its subcellular location is the nucleus. Its function is as follows. May regulate cell proliferation in a tissue-specific manner. This chain is Homeobox protein koza, found in Xenopus laevis (African clawed frog).